A 354-amino-acid polypeptide reads, in one-letter code: Thiamine thiazole synthase (354 aa).

Substrate contacts are provided by residues alanine 83, 104 to 105, glycine 112, and valine 177; that span reads EA. Cysteine 210 carries the 2,3-didehydroalanine (Cys) modification. Substrate is bound by residues aspartate 212, histidine 227, methionine 305, and 315–317; that span reads RMR.

Belongs to the THI4 family. Homooctamer. Fe cation is required as a cofactor. Post-translationally, during the catalytic reaction, a sulfide is transferred from Cys-210 to a reaction intermediate, generating a dehydroalanine residue.

It is found in the cytoplasm. The protein localises to the nucleus. It carries out the reaction [ADP-thiazole synthase]-L-cysteine + glycine + NAD(+) = [ADP-thiazole synthase]-dehydroalanine + ADP-5-ethyl-4-methylthiazole-2-carboxylate + nicotinamide + 3 H2O + 2 H(+). In terms of biological role, involved in biosynthesis of the thiamine precursor thiazole. Catalyzes the conversion of NAD and glycine to adenosine diphosphate 5-(2-hydroxyethyl)-4-methylthiazole-2-carboxylic acid (ADT), an adenylated thiazole intermediate. The reaction includes an iron-dependent sulfide transfer from a conserved cysteine residue of the protein to a thiazole intermediate. The enzyme can only undergo a single turnover, which suggests it is a suicide enzyme. May have additional roles in adaptation to various stress conditions and in DNA damage tolerance. The sequence is that of Thiamine thiazole synthase from Candida albicans (strain WO-1) (Yeast).